Consider the following 588-residue polypeptide: 2-isopropylmalate synthase (588 aa).

The Pyruvate carboxyltransferase domain maps to 40 to 314 (PRWCAVDLRD…DPQIDFSDLD (275 aa)). Mg(2+) contacts are provided by Asp-49, His-253, His-255, and Asn-289. Residues 456 to 588 (APLDRVEEKW…TVREPELAAV (133 aa)) form a regulatory domain region.

Belongs to the alpha-IPM synthase/homocitrate synthase family. LeuA type 2 subfamily. As to quaternary structure, homodimer. Mg(2+) is required as a cofactor.

Its subcellular location is the cytoplasm. The enzyme catalyses 3-methyl-2-oxobutanoate + acetyl-CoA + H2O = (2S)-2-isopropylmalate + CoA + H(+). It functions in the pathway amino-acid biosynthesis; L-leucine biosynthesis; L-leucine from 3-methyl-2-oxobutanoate: step 1/4. Its function is as follows. Catalyzes the condensation of the acetyl group of acetyl-CoA with 3-methyl-2-oxobutanoate (2-ketoisovalerate) to form 3-carboxy-3-hydroxy-4-methylpentanoate (2-isopropylmalate). This is 2-isopropylmalate synthase from Clavibacter sepedonicus (Clavibacter michiganensis subsp. sepedonicus).